The primary structure comprises 102 residues: Large ribosomal subunit protein bL21 (102 aa).

This sequence belongs to the bacterial ribosomal protein bL21 family. In terms of assembly, part of the 50S ribosomal subunit. Contacts protein L20.

Its function is as follows. This protein binds to 23S rRNA in the presence of protein L20. This chain is Large ribosomal subunit protein bL21, found in Ligilactobacillus salivarius (strain UCC118) (Lactobacillus salivarius).